A 195-amino-acid chain; its full sequence is Endoribonuclease YbeY (195 aa).

Positions 153, 157, and 163 each coordinate Zn(2+).

The protein belongs to the endoribonuclease YbeY family. The cofactor is Zn(2+).

The protein localises to the cytoplasm. In terms of biological role, single strand-specific metallo-endoribonuclease involved in late-stage 70S ribosome quality control and in maturation of the 3' terminus of the 16S rRNA. This Prochlorococcus marinus (strain SARG / CCMP1375 / SS120) protein is Endoribonuclease YbeY.